A 448-amino-acid polypeptide reads, in one-letter code: UDP-N-acetylmuramoylalanine--D-glutamate ligase (448 aa).

G112–T118 provides a ligand contact to ATP.

It belongs to the MurCDEF family.

Its subcellular location is the cytoplasm. It carries out the reaction UDP-N-acetyl-alpha-D-muramoyl-L-alanine + D-glutamate + ATP = UDP-N-acetyl-alpha-D-muramoyl-L-alanyl-D-glutamate + ADP + phosphate + H(+). Its pathway is cell wall biogenesis; peptidoglycan biosynthesis. Its function is as follows. Cell wall formation. Catalyzes the addition of glutamate to the nucleotide precursor UDP-N-acetylmuramoyl-L-alanine (UMA). The polypeptide is UDP-N-acetylmuramoylalanine--D-glutamate ligase (Acinetobacter baumannii (strain ACICU)).